Reading from the N-terminus, the 170-residue chain is Type IV pilus assembly protein C (170 aa).

Residues 1-23 form the signal peptide; that stretch reads MKSKLPLILINLSLISSPLGANA. The disordered stretch occupies residues 87-107; that stretch reads KTVSKPAKSNTPPQQAPVNNS. Residues 93-107 show a composition bias toward polar residues; the sequence is AKSNTPPQQAPVNNS. Positions 109–166 form a coiled coil; sequence RSILEAELSNERKALTEAQKMLSQARLAKGGNINHQKINALQSNVLDRQQNIQALQRE.

It is found in the periplasm. In terms of biological role, required for stabilizing type IV pilus (T4p) in extended, nonretracted conformation on the bacterial cell surface. In Neisseria gonorrhoeae (strain ATCC 700825 / FA 1090), this protein is Type IV pilus assembly protein C.